A 225-amino-acid polypeptide reads, in one-letter code: Cytidylate kinase (225 aa).

11 to 19 lines the ATP pocket; sequence GPAAAGKST.

Belongs to the cytidylate kinase family. Type 1 subfamily.

It localises to the cytoplasm. The enzyme catalyses CMP + ATP = CDP + ADP. It carries out the reaction dCMP + ATP = dCDP + ADP. The sequence is that of Cytidylate kinase from Bacillus cytotoxicus (strain DSM 22905 / CIP 110041 / 391-98 / NVH 391-98).